Reading from the N-terminus, the 161-residue chain is Allophycocyanin beta chain (161 aa).

Position 71 is an N4-methylasparagine (Asn71). Cys81 provides a ligand contact to (2R,3E)-phycocyanobilin.

It belongs to the phycobiliprotein family. In terms of assembly, heterodimer of an alpha and a beta chain. Contains one covalently linked phycocyanobilin chromophore.

It localises to the cellular thylakoid membrane. In terms of biological role, light-harvesting photosynthetic bile pigment-protein from the phycobiliprotein complex. Allophycocyanin has a maximum absorption at approximately 650 nanometers. The chain is Allophycocyanin beta chain (apcB) from Mastigocladus laminosus (Fischerella sp.).